A 684-amino-acid polypeptide reads, in one-letter code: uncharacterized protein (684 aa).

Disordered stretches follow at residues 267–353 (MGAR…TCTD) and 388–449 (SVAS…AERE). Positions 316–326 (GMTSAKASTSY) are enriched in polar residues. Residues 438 to 449 (RPTEARRRAERE) are compositionally biased toward basic and acidic residues.

This is an uncharacterized protein from Colorado tick fever virus (strain USA/Florio N-7180) (CTFV).